Reading from the N-terminus, the 437-residue chain is Phosphoribosylamine--glycine ligase (437 aa).

In terms of domain architecture, ATP-grasp spans 109-316; that stretch reads KDFLARHGIP…LLDLIEAALN (208 aa). 135–196 serves as a coordination point for ATP; that stretch reads VRQQGAPIVI…EEYLDGEEAS (62 aa). The Mg(2+) site is built by Glu-286 and Asn-288.

The protein belongs to the GARS family. Mg(2+) is required as a cofactor. Requires Mn(2+) as cofactor.

The enzyme catalyses 5-phospho-beta-D-ribosylamine + glycine + ATP = N(1)-(5-phospho-beta-D-ribosyl)glycinamide + ADP + phosphate + H(+). It participates in purine metabolism; IMP biosynthesis via de novo pathway; N(1)-(5-phospho-D-ribosyl)glycinamide from 5-phospho-alpha-D-ribose 1-diphosphate: step 2/2. The protein is Phosphoribosylamine--glycine ligase of Xylella fastidiosa (strain 9a5c).